The following is a 79-amino-acid chain: uncharacterized protein (79 aa).

This is an uncharacterized protein from Sulfolobus spindle-shape virus 1 (SSV1).